The sequence spans 535 residues: Putative beta-glucosidase 41 (535 aa).

The first 27 residues, Met1–Ser27, serve as a signal peptide directing secretion. A beta-D-glucoside is bound at residue Gln49. The N-linked (GlcNAc...) asparagine glycan is linked to Asn118. Residues His151 and Asn196–Glu197 each bind a beta-D-glucoside. Glu197 functions as the Proton donor in the catalytic mechanism. Cys216 and Cys224 form a disulfide bridge. Residues Tyr340 and Glu413 each coordinate a beta-D-glucoside. Residue Glu413 is the Nucleophile of the active site. The N-linked (GlcNAc...) asparagine glycan is linked to Asn445. Residues Trp463, Glu470–Trp471, and Phe479 each bind a beta-D-glucoside. An N-linked (GlcNAc...) asparagine glycan is attached at Asn489.

This sequence belongs to the glycosyl hydrolase 1 family.

It catalyses the reaction Hydrolysis of terminal, non-reducing beta-D-glucosyl residues with release of beta-D-glucose.. In Arabidopsis thaliana (Mouse-ear cress), this protein is Putative beta-glucosidase 41.